The sequence spans 391 residues: Elongation factor Tu (391 aa).

The tr-type G domain maps to 10–201 (KPHVNIGTIG…EVDKYIPTPE (192 aa)). Positions 19 to 26 (GHVDHGKT) are G1. Residue 19-26 (GHVDHGKT) coordinates GTP. T26 contributes to the Mg(2+) binding site. A G2 region spans residues 55-59 (GITIS). The interval 76 to 79 (DCPG) is G3. GTP is bound by residues 76-80 (DCPGH) and 131-134 (NKVD). Residues 131–134 (NKVD) are G4. Residues 169 to 171 (SAL) are G5.

The protein belongs to the TRAFAC class translation factor GTPase superfamily. Classic translation factor GTPase family. EF-Tu/EF-1A subfamily. Monomer.

The protein localises to the cytoplasm. The catalysed reaction is GTP + H2O = GDP + phosphate + H(+). Its function is as follows. GTP hydrolase that promotes the GTP-dependent binding of aminoacyl-tRNA to the A-site of ribosomes during protein biosynthesis. The protein is Elongation factor Tu of Chelativorans sp. (strain BNC1).